The following is a 122-amino-acid chain: S-adenosylmethionine decarboxylase proenzyme (122 aa).

S69 serves as the catalytic Schiff-base intermediate with substrate; via pyruvic acid. S69 bears the Pyruvic acid (Ser); by autocatalysis mark. H74 (proton acceptor; for processing activity) is an active-site residue. Residue C89 is the Proton donor; for catalytic activity of the active site.

This sequence belongs to the prokaryotic AdoMetDC family. Type 1 subfamily. As to quaternary structure, heterotetramer of two alpha and two beta chains arranged as a dimer of alpha/beta heterodimers. Pyruvate serves as cofactor. In terms of processing, is synthesized initially as an inactive proenzyme. Formation of the active enzyme involves a self-maturation process in which the active site pyruvoyl group is generated from an internal serine residue via an autocatalytic post-translational modification. Two non-identical subunits are generated from the proenzyme in this reaction, and the pyruvate is formed at the N-terminus of the alpha chain, which is derived from the carboxyl end of the proenzyme. The post-translation cleavage follows an unusual pathway, termed non-hydrolytic serinolysis, in which the side chain hydroxyl group of the serine supplies its oxygen atom to form the C-terminus of the beta chain, while the remainder of the serine residue undergoes an oxidative deamination to produce ammonia and the pyruvoyl group blocking the N-terminus of the alpha chain.

The enzyme catalyses S-adenosyl-L-methionine + H(+) = S-adenosyl 3-(methylsulfanyl)propylamine + CO2. It functions in the pathway amine and polyamine biosynthesis; S-adenosylmethioninamine biosynthesis; S-adenosylmethioninamine from S-adenosyl-L-methionine: step 1/1. Catalyzes the decarboxylation of S-adenosylmethionine to S-adenosylmethioninamine (dcAdoMet), the propylamine donor required for the synthesis of the polyamines spermine and spermidine from the diamine putrescine. In Sulfolobus acidocaldarius (strain ATCC 33909 / DSM 639 / JCM 8929 / NBRC 15157 / NCIMB 11770), this protein is S-adenosylmethionine decarboxylase proenzyme.